Consider the following 488-residue polypeptide: Ribulose bisphosphate carboxylase large chain (488 aa).

Asn-127 and Thr-177 together coordinate substrate. Lys-179 functions as the Proton acceptor in the catalytic mechanism. Lys-181 is a substrate binding site. Residues Lys-205, Asp-207, and Glu-208 each contribute to the Mg(2+) site. At Lys-205 the chain carries N6-carboxylysine. His-297 serves as the catalytic Proton acceptor. Substrate-binding residues include Arg-298, His-330, and Ser-382.

This sequence belongs to the RuBisCO large chain family. Type I subfamily. In terms of assembly, heterohexadecamer of 8 large chains and 8 small chains. Mg(2+) is required as a cofactor.

It localises to the plastid. The protein localises to the chloroplast. It carries out the reaction 2 (2R)-3-phosphoglycerate + 2 H(+) = D-ribulose 1,5-bisphosphate + CO2 + H2O. The catalysed reaction is D-ribulose 1,5-bisphosphate + O2 = 2-phosphoglycolate + (2R)-3-phosphoglycerate + 2 H(+). In terms of biological role, ruBisCO catalyzes two reactions: the carboxylation of D-ribulose 1,5-bisphosphate, the primary event in carbon dioxide fixation, as well as the oxidative fragmentation of the pentose substrate in the photorespiration process. Both reactions occur simultaneously and in competition at the same active site. The sequence is that of Ribulose bisphosphate carboxylase large chain (rbcL) from Pyropia haitanensis (Red seaweed).